The primary structure comprises 348 residues: Dihydroorotase (348 aa).

The Zn(2+) site is built by histidine 14 and histidine 16. Substrate is bound by residues histidine 16–arginine 18 and asparagine 42. Residues lysine 100, histidine 137, and histidine 175 each coordinate Zn(2+). Lysine 100 carries the post-translational modification N6-carboxylysine. A substrate-binding site is contributed by histidine 137. Position 220 (leucine 220) interacts with substrate. Aspartate 248 is a Zn(2+) binding site. Aspartate 248 is a catalytic residue. Substrate is bound by residues histidine 252 and alanine 264.

This sequence belongs to the metallo-dependent hydrolases superfamily. DHOase family. Class II DHOase subfamily. In terms of assembly, homodimer. Zn(2+) is required as a cofactor.

The enzyme catalyses (S)-dihydroorotate + H2O = N-carbamoyl-L-aspartate + H(+). It functions in the pathway pyrimidine metabolism; UMP biosynthesis via de novo pathway; (S)-dihydroorotate from bicarbonate: step 3/3. Its function is as follows. Catalyzes the reversible cyclization of carbamoyl aspartate to dihydroorotate. This chain is Dihydroorotase, found in Pseudomonas putida (strain ATCC 700007 / DSM 6899 / JCM 31910 / BCRC 17059 / LMG 24140 / F1).